We begin with the raw amino-acid sequence, 262 residues long: 4-hydroxy-tetrahydrodipicolinate reductase (262 aa).

9-14 (GCLGRM) provides a ligand contact to NAD(+). Arg36 contacts NADP(+). NAD(+) is bound by residues 100–102 (GTT) and 121–124 (SANM). His154 acts as the Proton donor/acceptor in catalysis. A (S)-2,3,4,5-tetrahydrodipicolinate-binding site is contributed by His155. Lys158 functions as the Proton donor in the catalytic mechanism. 164-165 (GT) is a (S)-2,3,4,5-tetrahydrodipicolinate binding site.

It belongs to the DapB family.

Its subcellular location is the cytoplasm. It carries out the reaction (S)-2,3,4,5-tetrahydrodipicolinate + NAD(+) + H2O = (2S,4S)-4-hydroxy-2,3,4,5-tetrahydrodipicolinate + NADH + H(+). The catalysed reaction is (S)-2,3,4,5-tetrahydrodipicolinate + NADP(+) + H2O = (2S,4S)-4-hydroxy-2,3,4,5-tetrahydrodipicolinate + NADPH + H(+). The protein operates within amino-acid biosynthesis; L-lysine biosynthesis via DAP pathway; (S)-tetrahydrodipicolinate from L-aspartate: step 4/4. Catalyzes the conversion of 4-hydroxy-tetrahydrodipicolinate (HTPA) to tetrahydrodipicolinate. This is 4-hydroxy-tetrahydrodipicolinate reductase from Wolbachia pipientis subsp. Culex pipiens (strain wPip).